Consider the following 265-residue polypeptide: Type 1 encapsulin shell protein (265 aa).

It belongs to the encapsulin family. Family 1 subfamily. As to quaternary structure, found in a complex with DyP, suggesting it is the native cargo protein. Monomers form pentamers, which assemble to form hollow shells composed of 60 subunits with several openings.

The protein localises to the encapsulin nanocompartment. It localises to the cell membrane. In terms of biological role, shell component of a type 1 encapsulin nanocompartment. Assembles into proteinaceous shells 23-24 nm in diameter with 2-2.5 nm thick walls. Cargo protein DyP is targeted to the interior via its C-terminal extension; probably only 1 DyP hexamer is incorporated into each shell. Probably involved in protection against oxidative damage. The protein is Type 1 encapsulin shell protein of Mycolicibacterium paratuberculosis (strain ATCC BAA-968 / K-10) (Mycobacterium paratuberculosis).